The chain runs to 212 residues: Tetraspanin-31-A (212 aa).

Residues M1–A12 are Cytoplasmic-facing. A helical membrane pass occupies residues L13–W33. The Extracellular portion of the chain corresponds to G34–H44. Residues I45 to I65 form a helical membrane-spanning segment. Topologically, residues G66–Q72 are cytoplasmic. The chain crosses the membrane as a helical span at residues V73 to S93. Residues C94–K175 are Extracellular-facing. N-linked (GlcNAc...) asparagine glycans are attached at residues N100, N109, N117, and N134. The helical transmembrane segment at I176–F196 threads the bilayer. Residues R197–L212 are Cytoplasmic-facing.

Belongs to the tetraspanin (TM4SF) family.

It is found in the membrane. The protein is Tetraspanin-31-A (tspan31-a) of Xenopus laevis (African clawed frog).